A 370-amino-acid chain; its full sequence is MKSGRFIGVMSGTSLDGVDVVLAAIDERMVAQQASYTHPIPLQLKKDILGMCQGQSTTLSAVGKLDAQLGILFAEAVLALLAKEGLSAQDITAIGCHGQTVWHEPLGEPAFTMQLGDNNRIAAMTQIATVGDFRRRDMAYGGQGAPLVPAFHHALLAHATEKRMVLNIGGIANLSVLLPDSPIRGFDTGPGNMLMDAWIWRNCSLPYDKDACWALSGHVNQPLLEQMFNDPYFRLPAPKSTGREYFNAAWLDKQLARIPGVTAEDIQATLAELTAVSITEQVRLAGGCDRLLVCGGGARNPLVMARISALLSGTEVCTTDDAGIRGDDMEALAFAWLAFRTLSGKPGNLPSVTGASRETILGAVHPVSSW.

Residue 12–19 (GTSLDGVD) participates in ATP binding.

The protein belongs to the anhydro-N-acetylmuramic acid kinase family.

It catalyses the reaction 1,6-anhydro-N-acetyl-beta-muramate + ATP + H2O = N-acetyl-D-muramate 6-phosphate + ADP + H(+). It participates in amino-sugar metabolism; 1,6-anhydro-N-acetylmuramate degradation. It functions in the pathway cell wall biogenesis; peptidoglycan recycling. Catalyzes the specific phosphorylation of 1,6-anhydro-N-acetylmuramic acid (anhMurNAc) with the simultaneous cleavage of the 1,6-anhydro ring, generating MurNAc-6-P. Is required for the utilization of anhMurNAc either imported from the medium or derived from its own cell wall murein, and thus plays a role in cell wall recycling. In Yersinia pseudotuberculosis serotype O:1b (strain IP 31758), this protein is Anhydro-N-acetylmuramic acid kinase.